We begin with the raw amino-acid sequence, 1417 residues long: DNA-directed RNA polymerase subunit beta' (1417 aa).

4 residues coordinate Zn(2+): cysteine 68, cysteine 70, cysteine 83, and cysteine 86. 3 residues coordinate Mg(2+): aspartate 458, aspartate 460, and aspartate 462. Positions 811, 884, 891, and 894 each coordinate Zn(2+).

It belongs to the RNA polymerase beta' chain family. The RNAP catalytic core consists of 2 alpha, 1 beta, 1 beta' and 1 omega subunit. When a sigma factor is associated with the core the holoenzyme is formed, which can initiate transcription. The cofactor is Mg(2+). It depends on Zn(2+) as a cofactor.

It carries out the reaction RNA(n) + a ribonucleoside 5'-triphosphate = RNA(n+1) + diphosphate. In terms of biological role, DNA-dependent RNA polymerase catalyzes the transcription of DNA into RNA using the four ribonucleoside triphosphates as substrates. This is DNA-directed RNA polymerase subunit beta' from Francisella tularensis subsp. holarctica (strain OSU18).